The primary structure comprises 964 residues: MPGKLRVHELAKKLGITSKELLATLKEQGEFVKTASSTIEPPVVKKMQEHYQATGGAKPDTDNKPTPAKPAAKPGAPAPKPGTAQKPTAPTPGAVAAPKPGTAAAKPTPAKPAAPKPTAAKPAPAKPTAPKPATPAFSGPTPGDAAKKAAEDKATPKPGGEAPRPNAMPRPMAKPGPKPGARAPRVANNPFSTGAADRPGPRPGGGGPRPGGGPRPGGAPRPQGGQRSGAPRDGQGGPRGQRPGPGSGGPRPQGGNAAGAASQERQGGGRRPSPAMMPPTPGQMPAKAPGKGGRGGGQGGPGGGSGGFNRGGGGGAGRGGRRGGTAGAFGRPGGAPRRGRKSKRQKRNEYESMQAPNVIGGVRLPDGRGQTLRLARGASLSDFADKIGADAAALVQALFNLGEMVTATASVSDETLMLLGDEMNFKVEVVSPEDEDRELLESFDLQFGEDIGDEQDLAKRPPVVTVMGHVDHGKTRLLDTIRKANVGSGEAGGITQGIGAYQVKVEVEDDLRTITFLDTPGHEAFTAMRARGAKSTDIAVLVVAADDGVMPQTIEAINHAKAADVPIVVAVNKIDKPDASPEKIRGQLTEYGLVPEEYGGDTIFVDISAKQGTNIDELLASVCLTADAELDLVANPDMDAQGVAIEAHLDRGRGPVATVIVQRGTLRVGDSIVVGDTYGRVRRMVDEYGRDVDEAGPSRPVQVQGLNGVPGAGDNLLVVEDDRIARQIANQRNARKRNALAARSRKRVSLEDLDSVLKETSVLNLILKGDNAGSVEALEEALLKIEMDDEVELNIIDRGVGAVTQTNVTLAAASNAVIIAFNVRAEGKATEEANAEGVDIRYYTIIYRAIEEVEAALKGMLKPIYEEREVGKAEIRAIFKASAIGLIAGCMVEEGKVRRNATARIIRDGNVIASNAKIESLRREKDDVTEVSAGYECGMVLSYPDIAVGDKIEVFEMVEVPRDS.

The tract at residues 35 to 353 (ASSTIEPPVV…RQKRNEYESM (319 aa)) is disordered. Low complexity predominate over residues 64–108 (KPTPAKPAAKPGAPAPKPGTAQKPTAPTPGAVAAPKPGTAAAKPT). Residues 124–133 (PAKPTAPKPA) are compositionally biased toward pro residues. Residues 145–155 (AAKKAAEDKAT) show a composition bias toward basic and acidic residues. Over residues 166–178 (NAMPRPMAKPGPK) the composition is skewed to pro residues. Residues 220–233 (PRPQGGQRSGAPRD) show a composition bias toward low complexity. 2 stretches are compositionally biased toward gly residues: residues 234–252 (GQGG…GPRP) and 290–333 (GKGG…GRPG). Over residues 337 to 346 (RRGRKSKRQK) the composition is skewed to basic residues. One can recognise a tr-type G domain in the interval 459–631 (KRPPVVTVMG…VCLTADAELD (173 aa)). A G1 region spans residues 468–475 (GHVDHGKT). Residue 468 to 475 (GHVDHGKT) coordinates GTP. The interval 493–497 (GITQG) is G2. Residues 518–521 (DTPG) are G3. Residues 518–522 (DTPGH) and 572–575 (NKID) each bind GTP. Residues 572-575 (NKID) are G4. The segment at 608–610 (SAK) is G5.

Belongs to the TRAFAC class translation factor GTPase superfamily. Classic translation factor GTPase family. IF-2 subfamily.

It is found in the cytoplasm. In terms of biological role, one of the essential components for the initiation of protein synthesis. Protects formylmethionyl-tRNA from spontaneous hydrolysis and promotes its binding to the 30S ribosomal subunits. Also involved in the hydrolysis of GTP during the formation of the 70S ribosomal complex. The chain is Translation initiation factor IF-2 from Corynebacterium efficiens (strain DSM 44549 / YS-314 / AJ 12310 / JCM 11189 / NBRC 100395).